The following is a 463-amino-acid chain: Mitochondrial dynamics protein MID51 (463 aa).

At 1–23 (MAGAGERKGKKDDNGIGTAIDFV) the chain is on the mitochondrial intermembrane side. The helical transmembrane segment at 24-46 (LSNARLVLGVGGAAMLGIATLAV) threads the bilayer. Topologically, residues 47–463 (KRMYDRAISA…LSEPEVLLQT (417 aa)) are cytoplasmic. The interval 49-195 (MYDRAISAPT…LSGSLYDDLQ (147 aa)) is dimerization. Phosphoserine occurs at positions 55, 59, 79, and 94. Residues 57-77 (PTSPTRLSHSGKRSWEEPNWM) form a disordered region. The important for interaction with DNM1L stretch occupies residues 160 to 169 (AAVDICAELR). ADP is bound by residues serine 187, serine 189, and histidine 201. Residues 234–243 (RRENPEYFPR) are important for interaction with DNM1L. ADP-binding residues include serine 340, arginine 342, and lysine 368.

The protein belongs to the MID49/MID51 family. Homodimer. Interacts with DNM1L.

The protein resides in the mitochondrion outer membrane. Functionally, mitochondrial outer membrane protein which regulates mitochondrial fission/fusion dynamics. Promotes the recruitment and association of the fission mediator dynamin-related protein 1 (DNM1L) to the mitochondrial surface independently of the mitochondrial fission FIS1 and MFF proteins. Regulates DNM1L GTPase activity and DNM1L oligomerization. Binds ADP and can also bind GDP, although with lower affinity. Does not bind CDP, UDP, ATP, AMP or GTP. Inhibits DNM1L GTPase activity in the absence of bound ADP. Requires ADP to stimulate DNM1L GTPase activity and the assembly of DNM1L into long, oligomeric tubules with a spiral pattern, as opposed to the ring-like DNM1L oligomers observed in the absence of bound ADP. Does not require ADP for its function in recruiting DNM1L. This chain is Mitochondrial dynamics protein MID51 (Mief1), found in Rattus norvegicus (Rat).